The chain runs to 74 residues: Pelophylaxin-3 (74 aa).

The signal sequence occupies residues 1-22 (MFTLKKSLLLVFFLGTISLSLC). The propeptide occupies 23–39 (EDERNADEDDGEMTEEV). Cysteine 68 and cysteine 74 are joined by a disulfide.

In terms of tissue distribution, expressed by the skin glands.

It localises to the secreted. Antimicrobial peptide. In Pelophylax fukienensis (Fukien gold-striped pond frog), this protein is Pelophylaxin-3.